The sequence spans 120 residues: Ribonuclease P protein component 2 (120 aa).

It belongs to the eukaryotic/archaeal RNase P protein component 2 family. As to quaternary structure, consists of a catalytic RNA component and at least 4-5 protein subunits.

The protein resides in the cytoplasm. It catalyses the reaction Endonucleolytic cleavage of RNA, removing 5'-extranucleotides from tRNA precursor.. Part of ribonuclease P, a protein complex that generates mature tRNA molecules by cleaving their 5'-ends. The sequence is that of Ribonuclease P protein component 2 from Methanobrevibacter smithii (strain ATCC 35061 / DSM 861 / OCM 144 / PS).